The sequence spans 464 residues: UDP-N-acetylmuramoylalanine--D-glutamate ligase (464 aa).

112–118 (GTDGKTT) serves as a coordination point for ATP.

This sequence belongs to the MurCDEF family.

The protein localises to the cytoplasm. The catalysed reaction is UDP-N-acetyl-alpha-D-muramoyl-L-alanine + D-glutamate + ATP = UDP-N-acetyl-alpha-D-muramoyl-L-alanyl-D-glutamate + ADP + phosphate + H(+). It participates in cell wall biogenesis; peptidoglycan biosynthesis. Its function is as follows. Cell wall formation. Catalyzes the addition of glutamate to the nucleotide precursor UDP-N-acetylmuramoyl-L-alanine (UMA). The polypeptide is UDP-N-acetylmuramoylalanine--D-glutamate ligase (Pelodictyon phaeoclathratiforme (strain DSM 5477 / BU-1)).